The following is a 546-amino-acid chain: MEDQEALGFEHMGLDPRLLQAVTDLGWSRPTLIQEKAIPLALEGKDLLARARTGSGKTAAYAIPMLQSLLHKKATGPVMEQAVRGLVLVPTKELARQAQAMIQQLAAYCARDVRVANVSAAEDSASQRAVLMEKPDVVVGTPSRVLSHLQQNTLKLRDSLELLVVDEADLLFSFGFEDELKSLLCHLPRIYQAFLMSATFNEDVQTLKELVLHNPVTLKLQESQLPGPDQLQQFQVVCETEEDKFLLLYALLKLSLIRGKALLFVNTLERGYRLRLFLEQFSIPSCVLNGELPLRSRCHIISQFNQGLYDCVIATDAEILGPQVKGKRRGRGSKGNKASDPESGVARGIDFHHVSAVLNFDLPPTAEAYVHRAGRTARANNPGIVLTFVLPAEQPFLGKIEDLLSGEGEAPILLPYQFQMEEIESFRYRCRDAMRSVTKQAIREARLKEIKEELLHSEKLKTYFEDNPRDLQLLRHDLPLHPAVVKPHLGHVPDYLVPAALRGLVHPRKKRRKVPFSRKAKKVKAQNPLRDFKHRGKKPKPAAKPS.

The Q motif signature appears at 7–35 (LGFEHMGLDPRLLQAVTDLGWSRPTLIQE). In terms of domain architecture, Helicase ATP-binding spans 38 to 218 (IPLALEGKDL…ELVLHNPVTL (181 aa)). 51-58 (ARTGSGKT) lines the ATP pocket. Ser-126 carries the phosphoserine modification. Phosphothreonine is present on Thr-141. The short motif at 166 to 169 (DEAD) is the DEAD box element. The Helicase C-terminal domain occupies 230 to 424 (QLQQFQVVCE…PYQFQMEEIE (195 aa)). Disordered stretches follow at residues 324-344 (VKGK…PESG) and 508-546 (RKKR…AKPS). 3 stretches are compositionally biased toward basic residues: residues 325-334 (KGKRRGRGSK), 508-524 (RKKR…KKVK), and 532-546 (FKHR…AKPS).

It belongs to the DEAD box helicase family. DDX56/DBP9 subfamily. May form homooligomeric complexes. Interacts with IRF3. Interacts with OCT4 and POU5F1.

The protein resides in the nucleus. It localises to the nucleolus. The catalysed reaction is ATP + H2O = ADP + phosphate + H(+). In terms of biological role, nucleolar RNA helicase that plays a role in various biological processes including innate immunity, ribosome biogenesis or nucleolus organization. Plays an essential role in maintaining nucleolar integrity in planarian stem cells. Maintains embryonic stem cells proliferation by conventional regulation of ribosome assembly and interaction with OCT4 and POU5F1 complex. Regulates antiviral innate immunity by inhibiting the virus-triggered signaling nuclear translocation of IRF3. Mechanistically, acts by disrupting the interaction between IRF3 and importin IPO5. May play a role in later stages of the processing of the pre-ribosomal particles leading to mature 60S ribosomal subunits. Has intrinsic ATPase activity. The protein is Probable ATP-dependent RNA helicase DDX56 (Ddx56) of Mus musculus (Mouse).